The primary structure comprises 447 residues: Methylenetetrahydrofolate--tRNA-(uracil-5-)-methyltransferase TrmFO (447 aa).

13–18 (GAGLAG) provides a ligand contact to FAD.

Belongs to the MnmG family. TrmFO subfamily. Requires FAD as cofactor.

The protein resides in the cytoplasm. The catalysed reaction is uridine(54) in tRNA + (6R)-5,10-methylene-5,6,7,8-tetrahydrofolate + NADH + H(+) = 5-methyluridine(54) in tRNA + (6S)-5,6,7,8-tetrahydrofolate + NAD(+). It catalyses the reaction uridine(54) in tRNA + (6R)-5,10-methylene-5,6,7,8-tetrahydrofolate + NADPH + H(+) = 5-methyluridine(54) in tRNA + (6S)-5,6,7,8-tetrahydrofolate + NADP(+). Its function is as follows. Catalyzes the folate-dependent formation of 5-methyl-uridine at position 54 (M-5-U54) in all tRNAs. In Streptococcus thermophilus (strain ATCC BAA-250 / LMG 18311), this protein is Methylenetetrahydrofolate--tRNA-(uracil-5-)-methyltransferase TrmFO.